The sequence spans 249 residues: ATP-dependent Clp protease proteolytic subunit (249 aa).

Ser107 acts as the Nucleophile in catalysis. His132 is a catalytic residue. Residues 212–249 are disordered; sequence ESASQDNSLDPDAPDESASQDNSLDPDAPDETRPPKLR.

It belongs to the peptidase S14 family. Component of the chloroplastic Clp protease core complex.

Its subcellular location is the plastid. The protein localises to the chloroplast stroma. It carries out the reaction Hydrolysis of proteins to small peptides in the presence of ATP and magnesium. alpha-casein is the usual test substrate. In the absence of ATP, only oligopeptides shorter than five residues are hydrolyzed (such as succinyl-Leu-Tyr-|-NHMec, and Leu-Tyr-Leu-|-Tyr-Trp, in which cleavage of the -Tyr-|-Leu- and -Tyr-|-Trp bonds also occurs).. Cleaves peptides in various proteins in a process that requires ATP hydrolysis. Has a chymotrypsin-like activity. Plays a major role in the degradation of misfolded proteins. In Oenothera elata subsp. hookeri (Hooker's evening primrose), this protein is ATP-dependent Clp protease proteolytic subunit.